The sequence spans 126 residues: SPbeta prophage-derived uncharacterized protein YorC (126 aa).

In Bacillus subtilis (strain 168), this protein is SPbeta prophage-derived uncharacterized protein YorC (yorC).